The sequence spans 266 residues: Auxin-responsive protein IAA21 (266 aa).

The short motif at 24 to 28 is the EAR-like (transcriptional repression) element; sequence LRLGL. Residues 27–50 are disordered; it reads GLPGTAEEAESEGGGGGGTDAAPL. The region spanning 146 to 248 is the PB1 domain; sequence CLYVKVSMDG…SCRRLRIMKG (103 aa).

It belongs to the Aux/IAA family. As to quaternary structure, homodimers and heterodimers. In terms of tissue distribution, highly expressed in flowers. Expressed in roots and seedlings.

It localises to the nucleus. Its function is as follows. Aux/IAA proteins are short-lived transcriptional factors that function as repressors of early auxin response genes at low auxin concentrations. The chain is Auxin-responsive protein IAA21 (IAA21) from Oryza sativa subsp. japonica (Rice).